A 213-amino-acid polypeptide reads, in one-letter code: Protein-L-isoaspartate O-methyltransferase (213 aa).

Residue serine 62 is part of the active site.

Belongs to the methyltransferase superfamily. L-isoaspartyl/D-aspartyl protein methyltransferase family.

The protein localises to the cytoplasm. The catalysed reaction is [protein]-L-isoaspartate + S-adenosyl-L-methionine = [protein]-L-isoaspartate alpha-methyl ester + S-adenosyl-L-homocysteine. In terms of biological role, catalyzes the methyl esterification of L-isoaspartyl residues in peptides and proteins that result from spontaneous decomposition of normal L-aspartyl and L-asparaginyl residues. It plays a role in the repair and/or degradation of damaged proteins. The sequence is that of Protein-L-isoaspartate O-methyltransferase from Idiomarina loihiensis (strain ATCC BAA-735 / DSM 15497 / L2-TR).